The sequence spans 596 residues: UDP-glucuronate:xylan alpha-glucuronosyltransferase 2 (596 aa).

Residues 17-37 form a helical; Signal-anchor for type II membrane protein membrane-spanning segment; it reads LIRFNLVLLGFSFLLYTAIFF. Mn(2+) is bound by residues Asp-395 and Asp-397. Substrate-binding positions include 395–397, 424–426, 451–455, and 504–509; these read DAD, NSG, NGGDQ, and HYLGWK. Mn(2+) is bound at residue His-504.

It belongs to the glycosyltransferase 8 family. Glycogenin subfamily. The cofactor is Mn(2+).

It is found in the golgi apparatus membrane. In terms of biological role, glycosyltransferase required for the addition of both glucuronic acid and 4-O-methylglucuronic acid branches to xylan in stem cell walls. In association with GUX1, is responsible for almost all of the substitutions of the xylan backbone in stem glucuronoxylan. In Arabidopsis thaliana (Mouse-ear cress), this protein is UDP-glucuronate:xylan alpha-glucuronosyltransferase 2 (GUX2).